The chain runs to 299 residues: MIPFLHIFFSVLILVLFVLGNFANGFIALVNFIDWVKRKKISLADQILTALAVSRVGLLWALLLNWYLTELNPAFYSVELRITSYNAWVVTNHFSMWLAASLSIFYLLKIANFSNLSFLNLKRRVRSIILVILLGSLLFLVCHLLAVNMDENMWTEEYEGNMTGKMKLRNAAHLSYMTVTTLWSFIPFMLSLISFLMLIFSLCKHLKKMQLHGEGSRDPSTTVHIKALQTLISFLLLCAIFFLFLIISVWSPRRLQNEPVFMVCKAVGNIYLSFDSFVLIWRTKKLKHIFLLILCQIRC.

A topological domain (extracellular) is located at residue Met1. A helical membrane pass occupies residues 2–22 (IPFLHIFFSVLILVLFVLGNF). Topologically, residues 23–55 (ANGFIALVNFIDWVKRKKISLADQILTALAVSR) are cytoplasmic. The chain crosses the membrane as a helical span at residues 56–76 (VGLLWALLLNWYLTELNPAFY). The Extracellular portion of the chain corresponds to 77–87 (SVELRITSYNA). A helical transmembrane segment spans residues 88–108 (WVVTNHFSMWLAASLSIFYLL). At 109 to 126 (KIANFSNLSFLNLKRRVR) the chain is on the cytoplasmic side. A helical membrane pass occupies residues 127 to 147 (SIILVILLGSLLFLVCHLLAV). The Extracellular segment spans residues 148-181 (NMDENMWTEEYEGNMTGKMKLRNAAHLSYMTVTT). Asn161 is a glycosylation site (N-linked (GlcNAc...) asparagine). A helical transmembrane segment spans residues 182-202 (LWSFIPFMLSLISFLMLIFSL). Residues 203 to 229 (CKHLKKMQLHGEGSRDPSTTVHIKALQ) lie on the Cytoplasmic side of the membrane. A helical transmembrane segment spans residues 230-250 (TLISFLLLCAIFFLFLIISVW). Residues 251–259 (SPRRLQNEP) are Extracellular-facing. A helical membrane pass occupies residues 260 to 280 (VFMVCKAVGNIYLSFDSFVLI). Topologically, residues 281-299 (WRTKKLKHIFLLILCQIRC) are cytoplasmic.

Belongs to the G-protein coupled receptor T2R family.

The protein localises to the membrane. Receptor that may play a role in the perception of bitterness and is gustducin-linked. May play a role in sensing the chemical composition of the gastrointestinal content. The activity of this receptor may stimulate alpha gustducin, mediate PLC-beta-2 activation and lead to the gating of TRPM5. This Macaca mulatta (Rhesus macaque) protein is Taste receptor type 2 member 50 (TAS2R50).